A 573-amino-acid chain; its full sequence is Dihydroxy-acid dehydratase (573 aa).

C62 is a [2Fe-2S] cluster binding site. D94 serves as a coordination point for Mg(2+). C135 lines the [2Fe-2S] cluster pocket. Mg(2+) is bound by residues D136 and K137. At K137 the chain carries N6-carboxylysine. A [2Fe-2S] cluster-binding site is contributed by C212. E463 contributes to the Mg(2+) binding site. S489 serves as the catalytic Proton acceptor.

This sequence belongs to the IlvD/Edd family. In terms of assembly, homodimer. [2Fe-2S] cluster serves as cofactor. The cofactor is Mg(2+).

It carries out the reaction (2R)-2,3-dihydroxy-3-methylbutanoate = 3-methyl-2-oxobutanoate + H2O. The enzyme catalyses (2R,3R)-2,3-dihydroxy-3-methylpentanoate = (S)-3-methyl-2-oxopentanoate + H2O. It functions in the pathway amino-acid biosynthesis; L-isoleucine biosynthesis; L-isoleucine from 2-oxobutanoate: step 3/4. It participates in amino-acid biosynthesis; L-valine biosynthesis; L-valine from pyruvate: step 3/4. Its function is as follows. Functions in the biosynthesis of branched-chain amino acids. Catalyzes the dehydration of (2R,3R)-2,3-dihydroxy-3-methylpentanoate (2,3-dihydroxy-3-methylvalerate) into 2-oxo-3-methylpentanoate (2-oxo-3-methylvalerate) and of (2R)-2,3-dihydroxy-3-methylbutanoate (2,3-dihydroxyisovalerate) into 2-oxo-3-methylbutanoate (2-oxoisovalerate), the penultimate precursor to L-isoleucine and L-valine, respectively. The chain is Dihydroxy-acid dehydratase from Renibacterium salmoninarum (strain ATCC 33209 / DSM 20767 / JCM 11484 / NBRC 15589 / NCIMB 2235).